A 144-amino-acid chain; its full sequence is Deoxyuridine 5'-triphosphate nucleotidohydrolase (144 aa).

Substrate contacts are provided by residues 63–65 (RSG), N76, and 80–82 (TID).

Belongs to the dUTPase family. It depends on Mg(2+) as a cofactor.

It catalyses the reaction dUTP + H2O = dUMP + diphosphate + H(+). Its pathway is pyrimidine metabolism; dUMP biosynthesis; dUMP from dCTP (dUTP route): step 2/2. In terms of biological role, this enzyme is involved in nucleotide metabolism: it produces dUMP, the immediate precursor of thymidine nucleotides and it decreases the intracellular concentration of dUTP so that uracil cannot be incorporated into DNA. This is Deoxyuridine 5'-triphosphate nucleotidohydrolase from Porphyromonas gingivalis (strain ATCC BAA-308 / W83).